Reading from the N-terminus, the 326-residue chain is MAFTPFPPRQPTASARLPLTLMTLDDWALATITGADSEKYMQGQVTADVSQMTEDQHLLAAHCDAKGKMWSNLRLFRDGDGFAWIERRSVRESQLTELKKYAVFSKVTIAPDDERVLLGVAGFQARAALANIFSELPSKEKQVVKEGATTLLWFEHPAERFLIVTDEATANMLTDKLRGEAELNNSQQWLALNIEAGFPVIDAANSGQFIPQATNLQALGGISFKKGCYTGQEMVARAKFRGANKRALWLLAGSASRLPEAGEDLELKMGENWRRTGTVLAAVKLEDGQVVVQVVMNNDMEPDSIFRVRDDANTLRIEPLPYSLEE.

Folate-binding residues include tryptophan 27 and tryptophan 189.

This sequence belongs to the tRNA-modifying YgfZ family.

It localises to the cytoplasm. Its function is as follows. Folate-binding protein involved in regulating the level of ATP-DnaA and in the modification of some tRNAs. It is probably a key factor in regulatory networks that act via tRNA modification, such as initiation of chromosomal replication. The chain is tRNA-modifying protein YgfZ from Escherichia coli O7:K1 (strain IAI39 / ExPEC).